Here is a 728-residue protein sequence, read N- to C-terminus: 1,4-alpha-glucan branching enzyme GlgB (728 aa).

Asp-405 acts as the Nucleophile in catalysis. The Proton donor role is filled by Glu-458. The interval 686–712 (YHGSNAGNAGAVQSDEHESHGRPHSLS) is disordered.

It belongs to the glycosyl hydrolase 13 family. GlgB subfamily. Monomer.

It carries out the reaction Transfers a segment of a (1-&gt;4)-alpha-D-glucan chain to a primary hydroxy group in a similar glucan chain.. It participates in glycan biosynthesis; glycogen biosynthesis. In terms of biological role, catalyzes the formation of the alpha-1,6-glucosidic linkages in glycogen by scission of a 1,4-alpha-linked oligosaccharide from growing alpha-1,4-glucan chains and the subsequent attachment of the oligosaccharide to the alpha-1,6 position. This Enterobacter sp. (strain 638) protein is 1,4-alpha-glucan branching enzyme GlgB.